The sequence spans 773 residues: E3 ubiquitin-protein ligase RFWD3 (773 aa).

Disordered stretches follow at residues 18 to 67, 92 to 117, 139 to 230, and 259 to 279; these read VAEQ…SQVG, RVENINPGASEEHRQPSRVNRPIPVS, LRPP…EEVV, and GETLPKQSPQKTNPLLPSVSK. Residue Ser47 is modified to Phosphoserine; by ATM and ATR. Low complexity predominate over residues 50–59; sequence APPLLQPAPA. The residue at position 64 (Ser64) is a Phosphoserine; by ATM and ATR. Residues 151 to 164 show a composition bias toward basic residues; sequence RSRRRRGSASRRSR. Residues 186 to 205 show a composition bias toward polar residues; it reads VSRTQPHLPSMSQDSETRNP. The segment covering 207–221 has biased composition (low complexity); sequence SEDLQVSSSSSSDSE. Residues 263 to 273 show a composition bias toward polar residues; sequence PKQSPQKTNPL. An RING-type; degenerate zinc finger spans residues 287 to 331; the sequence is CTICFEHWTNAGDHRLSALRCGHLFGYKCISKWLKGQARKCPQCN. Positions 361–403 form a coiled coil; sequence SLLKEQMLRKQAELESAQCRLQLQVLTDECSKLHSRVQDLQKL. WD repeat units follow at residues 494–536, 538–576, and 582–627; these read MHGK…QTYN, GRPVWSCCWCLDESNHIYAGLVNGSILVYDLRNTSSHIQ, and KARC…SHWP.

As to quaternary structure, interacts with MDM2 and p53/TP53. Binds to the RPA complex via direct interaction with RPA2. Interacts with RAD51. Phosphorylated at Ser-46 and Ser-63 upon DNA damage by ATM or ATR. ATM phosphorylation occurs at early times upon DNA damage, while ATR is the major kinase at later times. Phosphorylation by ATM and ATR is required to stabilize p53/TP53. Part of the phosphorylation depends upon RPA2 presence.

The protein localises to the nucleus. It is found in the PML body. Its subcellular location is the cytoplasm. The catalysed reaction is S-ubiquitinyl-[E2 ubiquitin-conjugating enzyme]-L-cysteine + [acceptor protein]-L-lysine = [E2 ubiquitin-conjugating enzyme]-L-cysteine + N(6)-ubiquitinyl-[acceptor protein]-L-lysine.. The protein operates within protein modification; protein ubiquitination. Functionally, E3 ubiquitin-protein ligase required for the repair of DNA interstrand cross-links (ICL) in response to DNA damage. Plays a key role in RPA-mediated DNA damage signaling and repair. Acts by mediating ubiquitination of the RPA complex (RPA1, RPA2 and RPA3 subunits) and RAD51 at stalled replication forks, leading to remove them from DNA damage sites and promote homologous recombination. Also mediates the ubiquitination of p53/TP53 in the late response to DNA damage, and acts as a positive regulator of p53/TP53 stability, thereby regulating the G1/S DNA damage checkpoint. May act by catalyzing the formation of short polyubiquitin chains on p53/TP53 that are not targeted to the proteasome. In response to ionizing radiation, interacts with MDM2 and enhances p53/TP53 ubiquitination, possibly by restricting MDM2 from extending polyubiquitin chains on ubiquitinated p53/TP53. Required to translesion DNA synthesis across DNA-protein cross-link adducts by catalyzing ubiquitination of proteins on single-stranded DNA (ssDNA). The protein is E3 ubiquitin-protein ligase RFWD3 (RFWD3) of Ailuropoda melanoleuca (Giant panda).